Here is a 783-residue protein sequence, read N- to C-terminus: BMP/retinoic acid-inducible neural-specific protein 2 (783 aa).

Residues 1 to 33 (MRWQCGTRFRGLRPAVAPWTALLALGLPGWVLA) form the signal peptide. The MACPF domain maps to 85 to 281 (RYRIYREFAR…FVAAALSYIT (197 aa)). Residues asparagine 185, asparagine 354, asparagine 473, asparagine 579, asparagine 626, and asparagine 658 are each glycosylated (N-linked (GlcNAc...) asparagine).

Belongs to the BRINP family.

The protein resides in the secreted. Its function is as follows. Inhibits neuronal cell proliferation by negative regulation of the cell cycle transition. In Homo sapiens (Human), this protein is BMP/retinoic acid-inducible neural-specific protein 2 (BRINP2).